The following is a 475-amino-acid chain: Squamosa promoter-binding-like protein 12 (475 aa).

The segment at 49–73 (NHGSTNSSGGTFTSSSELANGSSKS) is disordered. Low complexity predominate over residues 51 to 73 (GSTNSSGGTFTSSSELANGSSKS). The SBP-type zinc finger occupies 177–254 (SSYCQVEGCK…SDHNARRRKP (78 aa)). Zn(2+) is bound by residues C180, C185, C202, H205, C221, C224, H228, and C240. The Bipartite nuclear localization signal signature appears at 237–253 (KKSCRRRLSDHNARRRK). The interval 437 to 475 (GGGGFWQDGDDPPPLDHASQAQAFMHPGNGSSSGYGHLH) is disordered. The span at 465–475 (NGSSSGYGHLH) shows a compositional bias: polar residues.

In terms of tissue distribution, expressed in young panicles.

It is found in the nucleus. Its function is as follows. Trans-acting factor that binds specifically to the consensus nucleotide sequence 5'-TNCGTACAA-3'. May be involved in panicle development. The protein is Squamosa promoter-binding-like protein 12 (SPL12) of Oryza sativa subsp. indica (Rice).